A 557-amino-acid polypeptide reads, in one-letter code: Aerobic glycerol-3-phosphate dehydrogenase (557 aa).

Residue Asp21–Glu49 coordinates FAD.

It belongs to the FAD-dependent glycerol-3-phosphate dehydrogenase family. FAD serves as cofactor.

It localises to the cytoplasm. It carries out the reaction a quinone + sn-glycerol 3-phosphate = dihydroxyacetone phosphate + a quinol. The protein operates within polyol metabolism; glycerol degradation via glycerol kinase pathway; glycerone phosphate from sn-glycerol 3-phosphate (aerobic route): step 1/1. The sequence is that of Aerobic glycerol-3-phosphate dehydrogenase (glpD) from Staphylococcus saprophyticus subsp. saprophyticus (strain ATCC 15305 / DSM 20229 / NCIMB 8711 / NCTC 7292 / S-41).